The primary structure comprises 576 residues: uncharacterized protein (576 aa).

The N-terminal stretch at 1–28 is a signal peptide; sequence MLRLNGLRVLLRTLAAIGALLTTASASA. The active-site Acyl-ester intermediate is Ser185. 2 disulfides stabilise this stretch: Cys252–Cys269 and Cys278–Cys286. Ca(2+) contacts are provided by Asp253, Asp256, Asp260, and Val262. Catalysis depends on charge relay system residues Asp414 and His464. The cysteines at positions 529 and 551 are disulfide-linked.

It belongs to the tannase family.

This is an uncharacterized protein from Xanthomonas campestris pv. campestris (strain ATCC 33913 / DSM 3586 / NCPPB 528 / LMG 568 / P 25).